The chain runs to 262 residues: MDINASRALANVYDLPDDFFPKIDDLVRDAKDALEPYWKSDSIKKHVLIATHFVDLIEDFWQTTQGMHEIAESLRAVIPPTTAPVPTGYLIQHEEAEEIPLGDLFKHQEERIVSFQPDYPITARIHAHLKAYAKINEESLDRARRLLWWHYNCLLWGEANVTNYISRLRTWLSTPEKYRGRDAPTIEAITRPIQVAQGGRKTSSGTRKPRGLEPRRRKVKTTVVYGRRRSKSRDRRAPSPQRAGSPLPRSSSSHHRSPSPRK.

The disordered stretch occupies residues 183 to 262 (APTIEAITRP…SHHRSPSPRK (80 aa)). Positions 215-233 (RRRKVKTTVVYGRRRSKSR) match the Bipartite nuclear localization signal motif. The span at 215-234 (RRRKVKTTVVYGRRRSKSRD) shows a compositional bias: basic residues. Ser232, Ser239, and Ser245 each carry phosphoserine; by host. Over residues 252–262 (SSHHRSPSPRK) the composition is skewed to basic residues. An RNA binding region spans residues 254-260 (HHRSPSP).

Belongs to the avihepadnavirus core antigen family. Homodimerizes, then multimerizes.

Its subcellular location is the virion. It localises to the host cytoplasm. In terms of biological role, self assembles to form an icosahedral capsid. Most capsid appear to be large particles with an icosahedral symmetry of T=4 and consist of 240 copies of capsid protein, though a fraction forms smaller T=3 particles consisting of 180 capsid proteins. Entering capsid are transported along microtubules to the nucleus. Phosphorylation of the capsid is thought to induce exposure of nuclear localization signal in the C-terminal portion of the capsid protein that allows binding to the nuclear pore complex via the importin (karyopherin-) alpha and beta. Capsids are imported in intact form through the nuclear pore into the nuclear basket, where it probably binds NUP153. Only capsids that contain the mature viral genome can release the viral DNA and capsid protein into the nucleoplasm. Immature capsids get stucked in the basket. Capsids encapsulate the pre-genomic RNA and the P protein. Pre-genomic RNA is reverse transcribed into DNA while the capsid is still in the cytoplasm. The capsid can then either be directed to the nucleus, providing more genome for transcription, or bud through the endoplasmic reticulum to provide new virions. The protein is Capsid protein (C) of Anas (ducks).